A 376-amino-acid chain; its full sequence is Serpin B6 (376 aa).

Residue Met-1 is modified to N-acetylmethionine. At Ser-151 the chain carries Phosphoserine. Lys-195 is modified (N6-acetyllysine).

It belongs to the serpin family. Ov-serpin subfamily. As to quaternary structure, forms a complex with the monomeric form of beta-tryptase.

It is found in the cytoplasm. Functionally, inhibitor of cathepsin G, kallikrein-8 and thrombin. May play an important role in the inner ear in the protection against leakage of lysosomal content during stress. May be involved in the regulation of serine proteinases present in the brain or extravasated from the blood. In Pongo abelii (Sumatran orangutan), this protein is Serpin B6 (SERPINB6).